Consider the following 113-residue polypeptide: T cell receptor alpha variable 8-6 (113 aa).

The first 20 residues, 1-20 (MLLLLVPAFQVIFTLGGTRA), serve as a signal peptide directing secretion. Residues 21–113 (QSVTQLDSQV…DTAEYFCAVS (93 aa)) form the Ig-like domain. Cys42 and Cys110 form a disulfide bridge. Residues Asn43 and Asn87 are each glycosylated (N-linked (GlcNAc...) asparagine).

In terms of assembly, alpha-beta TR is a heterodimer composed of an alpha and beta chain; disulfide-linked. The alpha-beta TR is associated with the transmembrane signaling CD3 coreceptor proteins to form the TR-CD3 (TcR or TCR). The assembly of alpha-beta TR heterodimers with CD3 occurs in the endoplasmic reticulum where a single alpha-beta TR heterodimer associates with one CD3D-CD3E heterodimer, one CD3G-CD3E heterodimer and one CD247 homodimer forming a stable octameric structure. CD3D-CD3E and CD3G-CD3E heterodimers preferentially associate with TR alpha and TR beta chains, respectively. The association of the CD247 homodimer is the last step of TcR assembly in the endoplasmic reticulum and is required for transport to the cell surface.

The protein localises to the cell membrane. In terms of biological role, v region of the variable domain of T cell receptor (TR) alpha chain that participates in the antigen recognition. Alpha-beta T cell receptors are antigen specific receptors which are essential to the immune response and are present on the cell surface of T lymphocytes. Recognize peptide-major histocompatibility (MH) (pMH) complexes that are displayed by antigen presenting cells (APC), a prerequisite for efficient T cell adaptive immunity against pathogens. Binding of alpha-beta TR to pMH complex initiates TR-CD3 clustering on the cell surface and intracellular activation of LCK that phosphorylates the ITAM motifs of CD3G, CD3D, CD3E and CD247 enabling the recruitment of ZAP70. In turn ZAP70 phosphorylates LAT, which recruits numerous signaling molecules to form the LAT signalosome. The LAT signalosome propagates signal branching to three major signaling pathways, the calcium, the mitogen-activated protein kinase (MAPK) kinase and the nuclear factor NF-kappa-B (NF-kB) pathways, leading to the mobilization of transcription factors that are critical for gene expression and essential for T cell growth and differentiation. The T cell repertoire is generated in the thymus, by V-(D)-J rearrangement. This repertoire is then shaped by intrathymic selection events to generate a peripheral T cell pool of self-MH restricted, non-autoaggressive T cells. Post-thymic interaction of alpha-beta TR with the pMH complexes shapes TR structural and functional avidity. The sequence is that of T cell receptor alpha variable 8-6 from Homo sapiens (Human).